The primary structure comprises 128 residues: L-ectoine synthase (128 aa).

Belongs to the ectoine synthase family.

The catalysed reaction is (2S)-4-acetamido-2-aminobutanoate = L-ectoine + H2O. The protein operates within amine and polyamine biosynthesis; ectoine biosynthesis; L-ectoine from L-aspartate 4-semialdehyde: step 3/3. Its function is as follows. Catalyzes the circularization of gamma-N-acetyl-alpha,gamma-diaminobutyric acid (ADABA) to ectoine (1,4,5,6-tetrahydro-2-methyl-4-pyrimidine carboxylic acid), which is an excellent osmoprotectant. This chain is L-ectoine synthase, found in Oceanobacillus iheyensis (strain DSM 14371 / CIP 107618 / JCM 11309 / KCTC 3954 / HTE831).